We begin with the raw amino-acid sequence, 401 residues long: uncharacterized protein (401 aa).

Lys242 is subject to N6-(pyridoxal phosphate)lysine.

Belongs to the class-I pyridoxal-phosphate-dependent aminotransferase family. In terms of assembly, homodimer. The cofactor is pyridoxal 5'-phosphate.

The protein resides in the cytoplasm. This is an uncharacterized protein from Saccharolobus solfataricus (strain ATCC 35092 / DSM 1617 / JCM 11322 / P2) (Sulfolobus solfataricus).